A 161-amino-acid chain; its full sequence is Nucleotide-binding protein Gura_0717 (161 aa).

The protein belongs to the YajQ family.

Functionally, nucleotide-binding protein. The sequence is that of Nucleotide-binding protein Gura_0717 from Geotalea uraniireducens (strain Rf4) (Geobacter uraniireducens).